A 300-amino-acid chain; its full sequence is Acetyl-coenzyme A carboxylase carboxyl transferase subunit beta 1 (300 aa).

In terms of domain architecture, CoA carboxyltransferase N-terminal spans 26-294 (MWVKCPSCGD…HTSAAQHVPA (269 aa)). Zn(2+) is bound by residues cysteine 30, cysteine 33, cysteine 49, and cysteine 51. The C4-type zinc finger occupies 30-51 (CPSCGDLIYTRQFSDNLKVCKC).

The protein belongs to the AccD/PCCB family. Acetyl-CoA carboxylase is a heterohexamer composed of biotin carboxyl carrier protein (AccB), biotin carboxylase (AccC) and two subunits each of ACCase subunit alpha (AccA) and ACCase subunit beta (AccD). It depends on Zn(2+) as a cofactor.

It localises to the cytoplasm. The catalysed reaction is N(6)-carboxybiotinyl-L-lysyl-[protein] + acetyl-CoA = N(6)-biotinyl-L-lysyl-[protein] + malonyl-CoA. It participates in lipid metabolism; malonyl-CoA biosynthesis; malonyl-CoA from acetyl-CoA: step 1/1. Component of the acetyl coenzyme A carboxylase (ACC) complex. Biotin carboxylase (BC) catalyzes the carboxylation of biotin on its carrier protein (BCCP) and then the CO(2) group is transferred by the transcarboxylase to acetyl-CoA to form malonyl-CoA. This chain is Acetyl-coenzyme A carboxylase carboxyl transferase subunit beta 1, found in Roseiflexus sp. (strain RS-1).